We begin with the raw amino-acid sequence, 686 residues long: Translation initiation factor IF-2 (686 aa).

The interval 35–99 is disordered; that stretch reads MSTVEDETAE…EHGQKDTDRR (65 aa). Basic and acidic residues predominate over residues 50 to 68; it reads LQEEDKPEEKISKKEPDKK. A compositionally biased stretch (basic residues) spans 69–79; that stretch reads DRKKTKGKKQM. Residues 87 to 99 are compositionally biased toward basic and acidic residues; it reads EGTEHGQKDTDRR. A tr-type G domain is found at 186 to 355; that stretch reads LRPPIVTVMG…LLVAEMEELK (170 aa). Residues 195–202 are G1; sequence GHVDHGKT. 195 to 202 lines the GTP pocket; the sequence is GHVDHGKT. The tract at residues 220–224 is G2; the sequence is GITQH. Residues 241–244 are G3; that stretch reads DTPG. GTP-binding positions include 241 to 245 and 295 to 298; these read DTPGH and NKVD. Residues 295–298 form a G4 region; the sequence is NKVD. Residues 331–333 are G5; that stretch reads SAL.

Belongs to the TRAFAC class translation factor GTPase superfamily. Classic translation factor GTPase family. IF-2 subfamily.

It is found in the cytoplasm. Its function is as follows. One of the essential components for the initiation of protein synthesis. Protects formylmethionyl-tRNA from spontaneous hydrolysis and promotes its binding to the 30S ribosomal subunits. Also involved in the hydrolysis of GTP during the formation of the 70S ribosomal complex. The chain is Translation initiation factor IF-2 from Halothermothrix orenii (strain H 168 / OCM 544 / DSM 9562).